Here is a 562-residue protein sequence, read N- to C-terminus: Glucocorticoid modulatory element-binding protein 1 (562 aa).

A2 bears the N-acetylalanine mark. The 85-residue stretch at 72 to 156 (ASSIEANEDM…RKMMDSGQID (85 aa)) folds into the SAND domain. C103 provides a ligand contact to Zn(2+). 4 residues coordinate DNA: K129, K133, K136, and R147. Positions 160, 164, and 168 each coordinate Zn(2+). Positions 311–357 (LDNRRKQVEHGEEQFLYTLADLERQLEEQKKQAQDPRLKSQTVQNVV) form a coiled coil. The segment at 360–384 (PVSTPKPPKRPRLQRPASTTVLSPS) is disordered. Residues 375–384 (PASTTVLSPS) are compositionally biased toward polar residues.

As to quaternary structure, homodimer, and heterodimer of GMEB1 and GMEB2. Interacts with the glucocorticoid receptor (NR3C1) and NCOA2/TIF2. May interact with HSP27 and CREB-binding protein (CBP). Interacts with TRIM63.

It is found in the nucleus. It localises to the cytoplasm. Trans-acting factor that binds to glucocorticoid modulatory elements (GME) present in the TAT (tyrosine aminotransferase) promoter and increases sensitivity to low concentrations of glucocorticoids. Also binds to the transferrin receptor promoter. This is Glucocorticoid modulatory element-binding protein 1 (Gmeb1) from Rattus norvegicus (Rat).